Consider the following 238-residue polypeptide: uncharacterized protein (238 aa).

This is an uncharacterized protein from Ictaluridae (bullhead catfishes).